Reading from the N-terminus, the 227-residue chain is GTP:AMP phosphotransferase AK3, mitochondrial (227 aa).

Residues glycine 17, glycine 19, lysine 20, glycine 21, and threonine 22 each coordinate GTP. Lysine 20 is subject to N6-succinyllysine. Residue lysine 34 is modified to N6-acetyllysine. At serine 37 the chain carries Phosphoserine. An NMP region spans residues 37–66; sequence SSGDLLRDNMLRGTEIGVLAKAFIDQGKLI. AMP contacts are provided by serine 38 and arginine 43. Lysine 57 carries the N6-succinyllysine modification. Residue lysine 64 participates in AMP binding. Lysine 64 and lysine 80 each carry N6-acetyllysine; alternate. Lysine 64 and lysine 80 each carry N6-succinyllysine; alternate. Residues glycine 91, arginine 94, and glutamine 98 each coordinate AMP. Positions 127–164 are LID; it reads ARWIHPASGRVYNIEFNPPKTVGIDDLTGEPLIQREDD. Arginine 128, tyrosine 138, asparagine 139, arginine 161, and arginine 172 together coordinate GTP. N6-acetyllysine; alternate is present on residues lysine 174 and lysine 189. Residues lysine 174 and lysine 189 each carry the N6-succinyllysine; alternate modification. Threonine 201 contributes to the GTP binding site. An N6-acetyllysine modification is found at lysine 203.

This sequence belongs to the adenylate kinase family. AK3 subfamily. Monomer. Highly expressed in heart, skeletal muscle and liver, moderately expressed in pancreas and kidney, and weakly expressed in placenta, brain and lung.

The protein resides in the mitochondrion matrix. It catalyses the reaction a ribonucleoside 5'-triphosphate + AMP = a ribonucleoside 5'-diphosphate + ADP. It carries out the reaction GTP + AMP = GDP + ADP. The enzyme catalyses ITP + AMP = IDP + ADP. With respect to regulation, inhibited by ATP. Mitochondrial adenylate kinase with a specific GTP:AMP phosphotransferase activity. Could also use ITP as phosphate donor. Its physiological function is to recycle GTP into GDP which is necessary for the TCA cycle in the mitochondrial matrix. This is GTP:AMP phosphotransferase AK3, mitochondrial from Homo sapiens (Human).